The chain runs to 495 residues: Bile acid-sensitive ion channel (495 aa).

A binds the plasma membrane and stabilizes the channel in the closed state region spans residues 1–30; sequence MEHTEKSKGPAEKGLLGKIRRYLSKRPLPS. The Cytoplasmic portion of the chain corresponds to 1 to 61; that stretch reads MEHTEKSKGP…NIAQNQNKVR (61 aa). Residues 62–82 form a helical membrane-spanning segment; that stretch reads KVIWLSVVLGSVSLLVWQIYS. Residues 83–459 lie on the Extracellular side of the membrane; sequence RLVNYFMWPT…GLFCGASLIT (377 aa). Cystine bridges form between Cys-112–Cys-207, Cys-185–Cys-192, Cys-298–Cys-377, Cys-315–Cys-373, Cys-328–Cys-350, and Cys-330–Cys-342. Asn-147 and Asn-163 each carry an N-linked (GlcNAc...) asparagine glycan. An N-linked (GlcNAc...) asparagine glycan is attached at Asn-306. N-linked (GlcNAc...) asparagine glycosylation is found at Asn-370, Asn-405, and Asn-421. The GAS motif; ion selectivity filter motif lies at 454-456; that stretch reads GAS. The helical transmembrane segment at 460-480 threads the bilayer; sequence IIEIIEYLFTSFYWVFIFFLL. The Cytoplasmic segment spans residues 481–495; that stretch reads KILEMIQRTSPPQTV.

It belongs to the amiloride-sensitive sodium channel (TC 1.A.6) family. ASIC5 subfamily. As to quaternary structure, forms homotrimeric channels. As to expression, expressed by cholangiocytes (at protein level). Detected in brain, liver, duodenum, jejunum, ileum and testis.

It localises to the apical cell membrane. The protein localises to the cell membrane. It carries out the reaction Na(+)(in) = Na(+)(out). The enzyme catalyses Li(+)(in) = Li(+)(out). It catalyses the reaction K(+)(in) = K(+)(out). The catalysed reaction is H(+)(in) = H(+)(out). Its activity is regulated as follows. Inhibited by the diuretic drug amiloride. Inhibited by diminazene. Inhibited by extracellular Ca(2+). In terms of biological role, forms bile acid-gated sodium channels and may play a role in bile acid-dependent absorption and secretion by epithelial cells of the bile ducts. Displays high selectivity for sodium ions but can also permit the permeation of other cations. The gating could be indirect and the consequence of alterations of the membrane environment of the channel by bile acids. As a sodium channel of type II unipolar brush cells of the vestibulocerebellum, controlling the electrical activity of these cells, could play a role in motor coordination and balance. The polypeptide is Bile acid-sensitive ion channel (Rattus norvegicus (Rat)).